Here is a 479-residue protein sequence, read N- to C-terminus: Phosphatidylinositol 4-kinase type 2-alpha (479 aa).

Met1 is subject to N-acetylmethionine. Residues 1–74 form a disordered region; sequence MDETSPLVSP…ARGAAAQGQT (74 aa). Phosphoserine is present on residues Ser5, Ser9, Ser44, Ser47, and Ser51. A compositionally biased stretch (low complexity) spans 31–45; it reads VPGGAVRVAAAAGSG. Residues 53 to 66 show a composition bias toward basic and acidic residues; it reads GHDRERQPLLDRAR. One can recognise a PI3K/PI4K catalytic domain in the interval 124-453; it reads CIFPERIYQG…VQMPPVIVET (330 aa). Residues 130–136 are G-loop; sequence IYQGSSG. Residues 131–137 and Lys152 contribute to the ATP site; that span reads YQGSSGS. The tract at residues 157–159 is important for substrate binding; it reads EPY. An important for interaction with membranes region spans residues 165–178; it reads KWTKWLQKLCCPCC. 4 S-palmitoyl cysteine lipidation sites follow: Cys174, Cys175, Cys177, and Cys178. ATP is bound at residue 261 to 264; it reads QLFV. Positions 268–276 are important for interaction with membranes; the sequence is KDADYWLRR. A catalytic loop region spans residues 305–313; the sequence is RNTDRGNDN. An activation loop region spans residues 344–364; it reads AIDNGLAFPLKHPDSWRAYPF. Position 346 (Asp346) interacts with ATP. The important for interaction with membranes stretch occupies residues 359–368; sequence WRAYPFYWAW. Residue Ser462 is modified to Phosphoserine.

This sequence belongs to the PI3/PI4-kinase family. Type II PI4K subfamily. In terms of assembly, associates with the BLOC-1 and the AP-3 complexes; the BLOC-1 complex is required for optimal binding of PI4K2A to the AP-3 complex. Interacts with BLOC1S5 and DTNBP1. Interacts with FOS; this interaction may enhance phosphatidylinositol phosphorylation activity. Interacts with ITCH. Interacts with ATG9A. In terms of processing, palmitoylated by ZDHHC3 and ZDHHC7 in the CCPCC motif. Palmitoylation is cholesterol-dependent, and required for TGN localization. Post-translationally, ubiquitinated by ITCH; this does not lead to proteasomal degradation. As to expression, widely expressed. Highest expression is observed in kidney, brain, heart, skeletal muscle, and placenta and lowest expression is observed in colon, thymus, and small intestine.

Its subcellular location is the golgi apparatus. The protein resides in the trans-Golgi network membrane. It is found in the membrane raft. It localises to the cell projection. The protein localises to the dendrite. Its subcellular location is the presynaptic cell membrane. The protein resides in the synapse. It is found in the synaptosome. It localises to the mitochondrion. The protein localises to the endosome. Its subcellular location is the endosome membrane. The protein resides in the cytoplasmic vesicle. It is found in the membrane. It localises to the cell membrane. The protein localises to the perikaryon. Its subcellular location is the neuron projection. The enzyme catalyses a 1,2-diacyl-sn-glycero-3-phospho-(1D-myo-inositol) + ATP = a 1,2-diacyl-sn-glycero-3-phospho-(1D-myo-inositol 4-phosphate) + ADP + H(+). Its function is as follows. Membrane-bound phosphatidylinositol-4 kinase (PI4-kinase) that catalyzes the phosphorylation of phosphatidylinositol (PI) to phosphatidylinositol 4-phosphate (PI4P), a lipid that plays important roles in endocytosis, Golgi function, protein sorting and membrane trafficking and is required for prolonged survival of neurons. Besides, phosphorylation of phosphatidylinositol (PI) to phosphatidylinositol 4-phosphate (PI4P) is the first committed step in the generation of phosphatidylinositol 4,5-bisphosphate (PIP2), a precursor of the second messenger inositol 1,4,5-trisphosphate (InsP3). The chain is Phosphatidylinositol 4-kinase type 2-alpha (PI4K2A) from Homo sapiens (Human).